The chain runs to 332 residues: 2,3-diketo-L-gulonate reductase (332 aa).

H44 serves as the catalytic Proton donor. NAD(+) contacts are provided by residues 168 to 174 (ITMVDMS), 224 to 225 (WK), and 304 to 306 (GHE).

This sequence belongs to the LDH2/MDH2 oxidoreductase family. DlgD subfamily. In terms of assembly, homodimer.

The protein localises to the cytoplasm. It carries out the reaction 3-dehydro-L-gulonate + NAD(+) = 2,3-dioxo-L-gulonate + NADH + H(+). The enzyme catalyses 3-dehydro-L-gulonate + NADP(+) = 2,3-dioxo-L-gulonate + NADPH + H(+). In terms of biological role, catalyzes the reduction of 2,3-diketo-L-gulonate in the presence of NADH, to form 3-keto-L-gulonate. The polypeptide is 2,3-diketo-L-gulonate reductase (Salmonella paratyphi B (strain ATCC BAA-1250 / SPB7)).